A 93-amino-acid polypeptide reads, in one-letter code: Stromal cell-derived factor 1 (93 aa).

Positions 1–21 are cleaved as a signal peptide; the sequence is MDIRTLALFSILLGSLCLSEG. The Receptor activation motif signature appears at 22–23; it reads KP. Residues 29 to 33 form a receptor and heparin binding region; it reads RCPCR. Cystine bridges form between C30–C55 and C32–C71. Heparin is bound by residues 41–51, R62, Q69, and K85; that span reads KSNIKHLKILS. Receptor binding regions lie at residues 48-50 and 60-64; these read KIL and VARLK.

This sequence belongs to the intercrine alpha (chemokine CxC) family. In terms of assembly, monomer or homodimer; in equilibrium. Dimer formation is induced by non acidic pH and the presence of multivalent anions, and by binding to cxcr4 or heparin.

The protein resides in the secreted. Functionally, chemoattractant. Activates the C-X-C chemokine receptor cxcr4 to induce a rapid and transient rise in the level of intracellular calcium ions, and chemotaxis. Signaling with cxcr4 mediates the directional movement of mesodermal cells during gastrulation. Binds to the allosteric site (site 2) of integrins and activates them in a cxcr4-independent manner. This is Stromal cell-derived factor 1 from Xenopus tropicalis (Western clawed frog).